We begin with the raw amino-acid sequence, 477 residues long: Methylenetetrahydrofolate--tRNA-(uracil-5-)-methyltransferase TrmFO (477 aa).

15-20 provides a ligand contact to FAD; sequence GAGLAG.

Belongs to the MnmG family. TrmFO subfamily. The cofactor is FAD.

It is found in the cytoplasm. It catalyses the reaction uridine(54) in tRNA + (6R)-5,10-methylene-5,6,7,8-tetrahydrofolate + NADH + H(+) = 5-methyluridine(54) in tRNA + (6S)-5,6,7,8-tetrahydrofolate + NAD(+). The enzyme catalyses uridine(54) in tRNA + (6R)-5,10-methylene-5,6,7,8-tetrahydrofolate + NADPH + H(+) = 5-methyluridine(54) in tRNA + (6S)-5,6,7,8-tetrahydrofolate + NADP(+). Its function is as follows. Catalyzes the folate-dependent formation of 5-methyl-uridine at position 54 (M-5-U54) in all tRNAs. In Nitrobacter hamburgensis (strain DSM 10229 / NCIMB 13809 / X14), this protein is Methylenetetrahydrofolate--tRNA-(uracil-5-)-methyltransferase TrmFO.